The sequence spans 131 residues: Small ribosomal subunit protein uS11 (131 aa).

This sequence belongs to the universal ribosomal protein uS11 family. In terms of assembly, part of the 30S ribosomal subunit. Interacts with proteins S7 and S18. Binds to IF-3.

Functionally, located on the platform of the 30S subunit, it bridges several disparate RNA helices of the 16S rRNA. Forms part of the Shine-Dalgarno cleft in the 70S ribosome. The protein is Small ribosomal subunit protein uS11 of Deinococcus deserti (strain DSM 17065 / CIP 109153 / LMG 22923 / VCD115).